We begin with the raw amino-acid sequence, 333 residues long: Glycerol-3-phosphate dehydrogenase [NAD(P)+] (333 aa).

Residues serine 10, tryptophan 11, and lysine 105 each coordinate NADPH. Residues lysine 105, glycine 136, and threonine 138 each coordinate sn-glycerol 3-phosphate. Alanine 140 is a binding site for NADPH. Sn-glycerol 3-phosphate contacts are provided by lysine 191, aspartate 244, serine 254, arginine 255, and asparagine 256. Lysine 191 serves as the catalytic Proton acceptor. Arginine 255 contacts NADPH. NADPH contacts are provided by valine 279 and glutamate 281.

This sequence belongs to the NAD-dependent glycerol-3-phosphate dehydrogenase family.

Its subcellular location is the cytoplasm. It carries out the reaction sn-glycerol 3-phosphate + NAD(+) = dihydroxyacetone phosphate + NADH + H(+). The catalysed reaction is sn-glycerol 3-phosphate + NADP(+) = dihydroxyacetone phosphate + NADPH + H(+). The protein operates within membrane lipid metabolism; glycerophospholipid metabolism. In terms of biological role, catalyzes the reduction of the glycolytic intermediate dihydroxyacetone phosphate (DHAP) to sn-glycerol 3-phosphate (G3P), the key precursor for phospholipid synthesis. The protein is Glycerol-3-phosphate dehydrogenase [NAD(P)+] of Trichlorobacter lovleyi (strain ATCC BAA-1151 / DSM 17278 / SZ) (Geobacter lovleyi).